The primary structure comprises 441 residues: Deoxyguanosinetriphosphate triphosphohydrolase-like protein (441 aa).

The HD domain maps to 62–255 (RLTHSLEAAQ…MELADDIAYG (194 aa)).

It belongs to the dGTPase family. Type 2 subfamily.

This chain is Deoxyguanosinetriphosphate triphosphohydrolase-like protein (dgt), found in Vibrio cholerae serotype O1 (strain ATCC 39541 / Classical Ogawa 395 / O395).